The chain runs to 527 residues: Rhamnogalacturonate lyase A (527 aa).

A signal peptide spans 1 to 20 (MLSKTFLLSSAVLWARVANA). N-linked (GlcNAc...) asparagine glycosylation is found at N27 and N46. Disulfide bonds link C50–C93 and C184–C193. The N-linked (GlcNAc...) asparagine glycan is linked to N351.

The protein belongs to the polysaccharide lyase 4 family.

It is found in the secreted. The catalysed reaction is Endotype eliminative cleavage of L-alpha-rhamnopyranosyl-(1-&gt;4)-alpha-D-galactopyranosyluronic acid bonds of rhamnogalacturonan I domains in ramified hairy regions of pectin leaving L-rhamnopyranose at the reducing end and 4-deoxy-4,5-unsaturated D-galactopyranosyluronic acid at the non-reducing end.. Its function is as follows. Pectinolytic enzymes consist of four classes of enzymes: pectin lyase, polygalacturonase, pectin methylesterase and rhamnogalacturonase. Degrades the rhamnogalacturonan I (RG-I) backbone of pectin. Active against linseed rhamnogalacturonan. This is Rhamnogalacturonate lyase A (rglA) from Emericella nidulans (strain FGSC A4 / ATCC 38163 / CBS 112.46 / NRRL 194 / M139) (Aspergillus nidulans).